The chain runs to 552 residues: Hyaluronan synthase 2 (552 aa).

The Cytoplasmic segment spans residues 1 to 11 (MHCERFLCILR). A helical membrane pass occupies residues 12 to 32 (IIGTTLFGVSLLLGITAAYIV). Residues 33 to 45 (GYQFIQTDNYYFS) lie on the Extracellular side of the membrane. A helical transmembrane segment spans residues 46–66 (FGLYGAFLASHLIIQSLFAFL). Topologically, residues 67–374 (EHRKMKKSLE…NAMWFHKHHL (308 aa)) are cytoplasmic. Phosphothreonine is present on threonine 110. A Glycyl lysine isopeptide (Lys-Gly) (interchain with G-Cter in ubiquitin) cross-link involves residue lysine 190. O-linked (GlcNAc) serine glycosylation occurs at serine 221. Residue threonine 328 is modified to Phosphothreonine. A helical transmembrane segment spans residues 375–395 (WMTYEAIITGFFPFFLIATVI). The Extracellular segment spans residues 396–402 (QLFYRGK). A helical membrane pass occupies residues 403 to 423 (IWNILLFLLTVQLVGLIKSSF). Over 424–429 (ASCLRG) the chain is Cytoplasmic. A helical transmembrane segment spans residues 430–450 (NIVMVFMSLYSVLYMSSLLPA). Residues 451-475 (KMFAIATINKAGWGTSGRKTIVVNF) lie on the Extracellular side of the membrane. A helical transmembrane segment spans residues 476-496 (IGLIPVSVWFTILLGGVIFTI). Topologically, residues 497–510 (YKESKRPFSESKQT) are cytoplasmic. Residues 511 to 531 (VLIVGTLLYACYWVMLLTLYV) form a helical membrane-spanning segment. Residues 532–552 (VLINKCGRRKKGQQYDMVLDV) lie on the Extracellular side of the membrane.

This sequence belongs to the NodC/HAS family. As to quaternary structure, homodimer; dimerization promotes enzymatic activity. Forms heterodimer with HAS3. Forms heterodimer with HAS1. It depends on Mg(2+) as a cofactor. Post-translationally, phosphorylation at Thr-328 is essential for hyaluronan synthase activity. Phosphorylation at Thr-110 is required for transport from ER to Golgi. In terms of processing, O-GlcNAcylation at Ser-221 increases the stability of HAS2 and plasma membrane localization. Ubiquitination at Lys-190; this ubiquitination is essential for hyaluronan synthase activity and homo- or hetero-oligomerization. Can also be poly-ubiquitinated. Deubiquitinated by USP17 and USP4. USP17 efficiently removes 'Lys-63'- and 'Lys-48'-linked polyubiquitin chains, whereas USP4 preferentially removes monoubiquitination and, partially, both 'Lys-63'- and 'Lys-48'-linked polyubiquitin chain. Expressed in fibroblasts.

It localises to the cell membrane. The protein localises to the endoplasmic reticulum membrane. Its subcellular location is the vesicle. The protein resides in the golgi apparatus membrane. It is found in the lysosome. The enzyme catalyses [hyaluronan](n) + UDP-N-acetyl-alpha-D-glucosamine = N-acetyl-beta-D-glucosaminyl-(1-&gt;4)-[hyaluronan](n) + UDP + H(+). It catalyses the reaction N-acetyl-beta-D-glucosaminyl-(1-&gt;4)-[hyaluronan](n) + UDP-alpha-D-glucuronate = [hyaluronan](n+1) + UDP + H(+). It functions in the pathway glycan biosynthesis; hyaluronan biosynthesis. With respect to regulation, regulated by several post-translational modifications such as ubiquitination/deubiquitination, phosphorylation and O-GlcNAcylation. The enzymatic activity depends on the availability of UDP-GlcUA and UDP-GlcNAc. Its function is as follows. Catalyzes the addition of GlcNAc or GlcUA monosaccharides to the nascent hyaluronan polymer. Therefore, it is essential to hyaluronan synthesis a major component of most extracellular matrices that has a structural role in tissues architectures and regulates cell adhesion, migration and differentiation. This is one of three isoenzymes responsible for cellular hyaluronan synthesis and it is particularly responsible for the synthesis of high molecular mass hyaluronan. The protein is Hyaluronan synthase 2 of Homo sapiens (Human).